Consider the following 194-residue polypeptide: NADH-quinone oxidoreductase subunit B 1 (194 aa).

[4Fe-4S] cluster-binding residues include Cys-47, Cys-48, Cys-113, and Cys-142.

This sequence belongs to the complex I 20 kDa subunit family. As to quaternary structure, NDH-1 is composed of 14 different subunits. Subunits NuoB, C, D, E, F, and G constitute the peripheral sector of the complex. [4Fe-4S] cluster serves as cofactor.

It is found in the cell inner membrane. It catalyses the reaction a quinone + NADH + 5 H(+)(in) = a quinol + NAD(+) + 4 H(+)(out). Functionally, NDH-1 shuttles electrons from NADH, via FMN and iron-sulfur (Fe-S) centers, to quinones in the respiratory chain. The immediate electron acceptor for the enzyme in this species is believed to be ubiquinone. Couples the redox reaction to proton translocation (for every two electrons transferred, four hydrogen ions are translocated across the cytoplasmic membrane), and thus conserves the redox energy in a proton gradient. This is NADH-quinone oxidoreductase subunit B 1 from Sorangium cellulosum (strain So ce56) (Polyangium cellulosum (strain So ce56)).